A 38-amino-acid polypeptide reads, in one-letter code: Kappa-theraphotoxin-Hm2a (38 aa).

Intrachain disulfides connect Cys-2/Cys-16, Cys-9/Cys-21, and Cys-15/Cys-32. Residue Phe-38 is modified to Phenylalanine amide.

The protein belongs to the neurotoxin 10 (Hwtx-1) family. 13 (Hntx-13) subfamily. Expressed by the venom gland.

It localises to the secreted. Inhibitor of voltage-gated potassium channels. It specifically inhibits Kv2.1/KCNB1 channels. The sequence is that of Kappa-theraphotoxin-Hm2a from Heteroscodra maculata (Togo starburst tarantula).